Here is a 218-residue protein sequence, read N- to C-terminus: MRLMLLGGPGAGKGTQASLLINRYKIPQISTGDMLRAAIAKGTPLGLSAQKIMESGGLVSDDIIIGLVKERLKNPDCDRGFLFDGFPRTLVQAEALKDAEIHLDHVIEIAVDDEEIIERISGRRIHQPSGRVYHVVNQPPKNPGVDDITGEPLIQRDDDKEETIRKRLQVYHSQTAPLVQYYKEWAESGSKEAPKFHTISGTGTVEQIFDNIVTILET.

Gly-10–Thr-15 contacts ATP. The NMP stretch occupies residues Ser-30 to Val-59. AMP-binding positions include Thr-31, Arg-36, Gly-57–Val-59, Gly-85–Arg-88, and Gln-92. Positions Gly-122–Asp-159 are LID. Residues Arg-123 and Val-132–Tyr-133 contribute to the ATP site. Positions 156 and 167 each coordinate AMP. Position 203 (Gly-203) interacts with ATP.

Belongs to the adenylate kinase family. As to quaternary structure, monomer.

It localises to the cytoplasm. It carries out the reaction AMP + ATP = 2 ADP. Its pathway is purine metabolism; AMP biosynthesis via salvage pathway; AMP from ADP: step 1/1. In terms of biological role, catalyzes the reversible transfer of the terminal phosphate group between ATP and AMP. Plays an important role in cellular energy homeostasis and in adenine nucleotide metabolism. This is Adenylate kinase from Legionella pneumophila (strain Corby).